A 587-amino-acid chain; its full sequence is Pyruvate decarboxylase 3 (587 aa).

Residues aspartate 48 and histidine 135 each coordinate substrate. Residues aspartate 415–isoleucine 496 are thiamine pyrophosphate binding. Residues aspartate 464, asparagine 491, and glycine 493 each coordinate Mg(2+). Position 497 (glutamate 497) interacts with substrate.

This sequence belongs to the TPP enzyme family. As to quaternary structure, homotetramer. It depends on a metal cation as a cofactor. Requires thiamine diphosphate as cofactor.

It carries out the reaction a 2-oxocarboxylate + H(+) = an aldehyde + CO2. The polypeptide is Pyruvate decarboxylase 3 (PDC3) (Oryza sativa subsp. japonica (Rice)).